The sequence spans 269 residues: Staphylococcal secretory antigen ssaA2 (269 aa).

An N-terminal signal peptide occupies residues 1–27 (MKKIATATIATAGFATIAIASGNQAHA). Repeat copies occupy residues 83-85 (YNN), 88-90 (YNN), 91-93 (YNN), 97-99 (YNN), 103-105 (YNN), 106-108 (YSN), and 115-117 (YNN). The segment at 83 to 115 (YNNYSYNNYNNGYSYNNYSRYNNYSNNNQSYNY) is 7 X 3 AA repeats of Y-[NS]-N. Positions 148-269 (MAPSSNGRSI…SQAAGYNFIH (122 aa)) constitute a Peptidase C51 domain.

The protein localises to the secreted. Functionally, not known; immunogenic protein. This Staphylococcus aureus (strain MRSA252) protein is Staphylococcal secretory antigen ssaA2 (ssaA2).